A 298-amino-acid chain; its full sequence is ATP synthase gamma chain (298 aa).

Belongs to the ATPase gamma chain family. F-type ATPases have 2 components, CF(1) - the catalytic core - and CF(0) - the membrane proton channel. CF(1) has five subunits: alpha(3), beta(3), gamma(1), delta(1), epsilon(1). CF(0) has three main subunits: a, b and c.

It is found in the cell inner membrane. In terms of biological role, produces ATP from ADP in the presence of a proton gradient across the membrane. The gamma chain is believed to be important in regulating ATPase activity and the flow of protons through the CF(0) complex. The protein is ATP synthase gamma chain of Desulfosudis oleivorans (strain DSM 6200 / JCM 39069 / Hxd3) (Desulfococcus oleovorans).